We begin with the raw amino-acid sequence, 953 residues long: Protein translocase subunit SecA 1 (953 aa).

Residues Q83, 101 to 105, and D490 contribute to the ATP site; that span reads GEGKT. Positions 854 to 867 are enriched in low complexity; the sequence is AAAAAAKASDSAAK. The interval 854–953 is disordered; that stretch reads AAAAAAKASD…DRPAKSHRKG (100 aa). Residues 929–947 are compositionally biased toward basic and acidic residues; that stretch reads SRRERREAARKQAKADRPA.

The protein belongs to the SecA family. Monomer and homodimer. Part of the essential Sec protein translocation apparatus which comprises SecA, SecYEG and auxiliary proteins SecDF. Other proteins may also be involved.

The protein localises to the cell membrane. Its subcellular location is the cytoplasm. The catalysed reaction is ATP + H2O + cellular proteinSide 1 = ADP + phosphate + cellular proteinSide 2.. Part of the Sec protein translocase complex. Interacts with the SecYEG preprotein conducting channel. Has a central role in coupling the hydrolysis of ATP to the transfer of proteins into and across the cell membrane, serving as an ATP-driven molecular motor driving the stepwise translocation of polypeptide chains across the membrane. The sequence is that of Protein translocase subunit SecA 1 from Mycolicibacterium smegmatis (strain ATCC 700084 / mc(2)155) (Mycobacterium smegmatis).